Here is a 221-residue protein sequence, read N- to C-terminus: Lipoprotein-releasing system ATP-binding protein LolD (221 aa).

The ABC transporter domain maps to 6-220; that stretch reads LILKNISKHY…YKLKHGLLNI (215 aa). 42 to 49 is an ATP binding site; the sequence is GSSGSGKS.

Belongs to the ABC transporter superfamily. Lipoprotein translocase (TC 3.A.1.125) family. As to quaternary structure, the complex is composed of two ATP-binding proteins (LolD) and two transmembrane proteins (LolC and LolE).

The protein resides in the cell inner membrane. Functionally, part of the ABC transporter complex LolCDE involved in the translocation of mature outer membrane-directed lipoproteins, from the inner membrane to the periplasmic chaperone, LolA. Responsible for the formation of the LolA-lipoprotein complex in an ATP-dependent manner. The polypeptide is Lipoprotein-releasing system ATP-binding protein LolD (Rickettsia felis (strain ATCC VR-1525 / URRWXCal2) (Rickettsia azadi)).